The chain runs to 312 residues: Polyhedral envelope protein (312 aa).

Belongs to the baculoviridae PE family.

The protein resides in the virion membrane. Its function is as follows. Major component of the polyhedra envelope. This is Polyhedral envelope protein from Lymantria dispar multicapsid nuclear polyhedrosis virus (LdMNPV).